Here is a 254-residue protein sequence, read N- to C-terminus: Hydroxyacylglutathione hydrolase (254 aa).

Residues H54, H56, D58, H59, H111, D130, and H168 each contribute to the Zn(2+) site.

Belongs to the metallo-beta-lactamase superfamily. Glyoxalase II family. In terms of assembly, monomer. Zn(2+) serves as cofactor.

The catalysed reaction is an S-(2-hydroxyacyl)glutathione + H2O = a 2-hydroxy carboxylate + glutathione + H(+). It participates in secondary metabolite metabolism; methylglyoxal degradation; (R)-lactate from methylglyoxal: step 2/2. In terms of biological role, thiolesterase that catalyzes the hydrolysis of S-D-lactoyl-glutathione to form glutathione and D-lactic acid. This chain is Hydroxyacylglutathione hydrolase, found in Legionella pneumophila (strain Paris).